The chain runs to 251 residues: ATP synthase subunit a (251 aa).

Transmembrane regions (helical) follow at residues 28 to 48 (TDTV…AFFL), 84 to 104 (IAPF…ISNW), 130 to 150 (INYV…AGIW), 192 to 212 (IFAG…IMWA), and 220 to 240 (FDLF…ILYF).

It belongs to the ATPase A chain family. F-type ATPases have 2 components, CF(1) - the catalytic core - and CF(0) - the membrane proton channel. CF(1) has five subunits: alpha(3), beta(3), gamma(1), delta(1), epsilon(1). CF(0) has three main subunits: a(1), b(2) and c(9-12). The alpha and beta chains form an alternating ring which encloses part of the gamma chain. CF(1) is attached to CF(0) by a central stalk formed by the gamma and epsilon chains, while a peripheral stalk is formed by the delta and b chains.

The protein localises to the cell membrane. Its function is as follows. Key component of the proton channel; it plays a direct role in the translocation of protons across the membrane. The chain is ATP synthase subunit a from Mycobacterium leprae (strain TN).